The chain runs to 247 residues: Adenosylcobinamide-GDP ribazoletransferase (247 aa).

Transmembrane regions (helical) follow at residues 34-54, 59-79, 113-133, 138-158, and 194-214; these read IITF…VFMV, CGVP…TGGF, GGLA…ELAL, ILAS…LLMY, and VLLP…AIFI.

This sequence belongs to the CobS family. Requires Mg(2+) as cofactor.

It localises to the cell inner membrane. The enzyme catalyses alpha-ribazole + adenosylcob(III)inamide-GDP = adenosylcob(III)alamin + GMP + H(+). It catalyses the reaction alpha-ribazole 5'-phosphate + adenosylcob(III)inamide-GDP = adenosylcob(III)alamin 5'-phosphate + GMP + H(+). The protein operates within cofactor biosynthesis; adenosylcobalamin biosynthesis; adenosylcobalamin from cob(II)yrinate a,c-diamide: step 7/7. Functionally, joins adenosylcobinamide-GDP and alpha-ribazole to generate adenosylcobalamin (Ado-cobalamin). Also synthesizes adenosylcobalamin 5'-phosphate from adenosylcobinamide-GDP and alpha-ribazole 5'-phosphate. The chain is Adenosylcobinamide-GDP ribazoletransferase from Shigella dysenteriae serotype 1 (strain Sd197).